Reading from the N-terminus, the 241-residue chain is DNA repair protein RecO (241 aa).

Belongs to the RecO family.

Functionally, involved in DNA repair and RecF pathway recombination. The polypeptide is DNA repair protein RecO (Dinoroseobacter shibae (strain DSM 16493 / NCIMB 14021 / DFL 12)).